A 506-amino-acid chain; its full sequence is MQLKLEHFNIKIGQHKILLNIADAKELGVNPGDRVRIRGRESISAIADTTDDMVPPGTLGVFSEVYEHFVNWDKPVEVVPAFRSKSASVIKKMMDKKPVVQEEIKTLVNDIVEENLSEIELSAFITSSYIHGMTDDEVEWLTRAMIESGDTIEFDTHPIMDKHSIGGVPGNKISLLVVPIIAANGLLIPKTSSRAITGAGGTADLMEVLCPVEFSSQEVKEITEKVGGALVWGGATNIAPADDKLIRVEYPLSIDPYYQMLASIMAKKGAIGADNVVMDIPVGPSTKVPTVQEGQKLARDLINLGHRLGMNVECAITYGSSPIGRKVGPSLEVREALKVLESMEGPNSLIEKSAALAGILLEMGGAAPRDRGKEIALETLRSGKALEKMKQIIEAQGGDPKITSADIQVGQYTADILASADGYVIEFDNKWIIEIARLAGAPNDKGAGVAIHKKMGESVKKGDPILTIYAEKEFKLETALATAQRTNPIVVEGMLLKRIPGTYGFQ.

Residues glycine 167, 193–198 (SRAITG), and threonine 202 each bind AMP. Aspartate 255 functions as the Proton donor in the catalytic mechanism. The AMP site is built by serine 263 and lysine 287.

It belongs to the thymidine/pyrimidine-nucleoside phosphorylase family. Type 2 subfamily.

It catalyses the reaction AMP + phosphate = alpha-D-ribose 1,5-bisphosphate + adenine. It carries out the reaction CMP + phosphate = cytosine + alpha-D-ribose 1,5-bisphosphate. The enzyme catalyses UMP + phosphate = alpha-D-ribose 1,5-bisphosphate + uracil. Catalyzes the conversion of AMP and phosphate to adenine and ribose 1,5-bisphosphate (R15P). Exhibits phosphorylase activity toward CMP and UMP in addition to AMP. Functions in an archaeal AMP degradation pathway, together with R15P isomerase and RubisCO. The protein is AMP phosphorylase of Methanosarcina barkeri (strain Fusaro / DSM 804).